Consider the following 170-residue polypeptide: Flavin reductase (170 aa).

NAD(+) is bound by residues Ser-51, His-138, and 159 to 162 (FYRG).

The protein belongs to the non-flavoprotein flavin reductase family. Homodimer. Likely forms a loose transient complex with monooxygenases for which it provides FMNH(2).

It carries out the reaction FMNH2 + NAD(+) = FMN + NADH + 2 H(+). The enzyme catalyses FADH2 + NAD(+) = FAD + NADH + 2 H(+). Catalyzes the reduction of FMN, and to a lesser extent, FAD, using NADH as an electron donor. Is able to provide the FMNH(2) required for the Baeyer-Villiger oxidations catalyzed by 2,5-diketocamphane monooxygenases and 3,6-diketocamphane monooxygenase. NADPH acts as a very poor cosubstrate. The protein is Flavin reductase of Pseudomonas putida (Arthrobacter siderocapsulatus).